The chain runs to 659 residues: MQMRGCVCHLGVYCVHNDWKNKQYRVPIYQCLFFNAETHSLHTFLVIGNEISENLLDKISISKEKIFMWDLNEQIMSITQKTESICELMFGNKQIIQKLSRTFIFLTIILNSNMYEIIDVCIDSNAVLYMPDLRPMIIRCVGNYSKISSELLSDSDCTQATKKMRFDYHVTNFCFSLNVNGKKVLFSSTESSESILEKLLEFFTIQTYKLAEEQFLMVTPKNFFTVLFDEDMCLLLLQTVVSFLYDNLFRNKLVVKQVHDYIGPDLWPQGHERAVYFVGFPNMWFLSIYDLDNKIPCIKNICNRILLYCGLPDSLGPDGCQSVPSTQCVDEFEDLPNLGALQYLKYNSLVVTMETVENSENVYYFFGEQDLFIVKLVDIIQSLLELYVPKSFLPDFSDAYIKSEILLKFISRLHKKSNNIFCKIVKKITEFLRCFLNACRLMDLNWMFIRNMHIVYFIGPKKDPSVVLPLLKTSVESCWKKILNSSRTPVVNINYIPGYNFLHSSCSFLTSGDINSEDSHWTITASKCLYNCLGASQITVDFKNIYTNFQQMVSVFLSHRYENKYWIEYFEPNNYFLETHEGLLDCNRYTAVWTTENKLIRQSVGYPLTDKIDFIHYIQVVIEIFKKWLLTKYSQQEYAETVRLGSKIISDHLHLFNVN.

This sequence belongs to the herpesviridae HEPA family. As to quaternary structure, associates with the primase and the helicase to form the helicase-primase complex. Interacts with the origin-binding protein. Interacts with the polymerase catalytic subunit.

The protein localises to the host nucleus. Functionally, component of the helicase/primase complex. Unwinds the DNA at the replication forks and generates single-stranded DNA for both leading and lagging strand synthesis. The primase synthesizes short RNA primers on the lagging strand that the polymerase presumably elongates using dNTPs. The primase-associated factor has no known catalytic activity in the complex and may serve to facilitate the formation of the replisome by directly interacting with the origin-binding protein and the polymerase. This chain is DNA helicase/primase complex-associated protein (U74), found in Human herpesvirus 7 (strain JI) (HHV-7).